Consider the following 968-residue polypeptide: Protein translocase subunit SecA (968 aa).

Residues Gln-86, 104 to 108, and Asp-494 contribute to the ATP site; that span reads GEGKT. A disordered region spans residues 835-968; that stretch reads PAESAEESTD…RAAKAAKKRR (134 aa). Low complexity-rich tracts occupy residues 883 to 892 and 910 to 923; these read ARVATRPAAE and SAPS…FSEG. The segment covering 956 to 968 has biased composition (basic residues); the sequence is ARRRAAKAAKKRR.

This sequence belongs to the SecA family. Monomer and homodimer. Part of the essential Sec protein translocation apparatus which comprises SecA, SecYEG and auxiliary proteins SecDF. Other proteins may also be involved.

Its subcellular location is the cell membrane. It is found in the cytoplasm. The enzyme catalyses ATP + H2O + cellular proteinSide 1 = ADP + phosphate + cellular proteinSide 2.. Functionally, part of the Sec protein translocase complex. Interacts with the SecYEG preprotein conducting channel. Has a central role in coupling the hydrolysis of ATP to the transfer of proteins into and across the cell membrane, serving as an ATP-driven molecular motor driving the stepwise translocation of polypeptide chains across the membrane. This Beutenbergia cavernae (strain ATCC BAA-8 / DSM 12333 / CCUG 43141 / JCM 11478 / NBRC 16432 / NCIMB 13614 / HKI 0122) protein is Protein translocase subunit SecA.